Here is a 498-residue protein sequence, read N- to C-terminus: Guanosine-5'-triphosphate,3'-diphosphate pyrophosphatase (498 aa).

It belongs to the GppA/Ppx family. GppA subfamily.

The catalysed reaction is guanosine 3'-diphosphate 5'-triphosphate + H2O = guanosine 3',5'-bis(diphosphate) + phosphate + H(+). It participates in purine metabolism; ppGpp biosynthesis; ppGpp from GTP: step 2/2. Its function is as follows. Catalyzes the conversion of pppGpp to ppGpp. Guanosine pentaphosphate (pppGpp) is a cytoplasmic signaling molecule which together with ppGpp controls the 'stringent response', an adaptive process that allows bacteria to respond to amino acid starvation, resulting in the coordinated regulation of numerous cellular activities. This is Guanosine-5'-triphosphate,3'-diphosphate pyrophosphatase from Pectobacterium atrosepticum (strain SCRI 1043 / ATCC BAA-672) (Erwinia carotovora subsp. atroseptica).